Reading from the N-terminus, the 202-residue chain is MIVKICGLKKAVDVAAAVDNGADMIGFVFAKSKRQVTVEKAHELAKNIPANVKKVGVFVNPTEEELKAAIKGVPLDIVQLHGQEPAKQANRTDAEVIKAFPVKDGKLPTNINDYPNAYILLDAPAEEYEGGSGKTFDWDKINRDMLTKNKLIIAGGLNAQNVQEAIKRFEPYAVDISSGVETNGEKDPEKIKCFIKTAKGVE.

It belongs to the TrpF family.

It carries out the reaction N-(5-phospho-beta-D-ribosyl)anthranilate = 1-(2-carboxyphenylamino)-1-deoxy-D-ribulose 5-phosphate. It participates in amino-acid biosynthesis; L-tryptophan biosynthesis; L-tryptophan from chorismate: step 3/5. This is N-(5'-phosphoribosyl)anthranilate isomerase from Listeria monocytogenes serotype 4b (strain CLIP80459).